Reading from the N-terminus, the 297-residue chain is Halorhodopsin (297 aa).

The disordered stretch occupies residues 1–31 (MRSRTYHDQSVCGPYGSQRTDCDRDTDAGSD). Residues 1-45 (MRSRTYHDQSVCGPYGSQRTDCDRDTDAGSDTDVHGAQVATQIRT) lie on the Extracellular side of the membrane. Residues 46-71 (DTLLHSSLWVNIALAGLSILVFLYMA) traverse the membrane as a helical segment. Residues 72–77 (RTVRAN) lie on the Cytoplasmic side of the membrane. Residues 78–101 (RARLIVGATLMIPLVSLSSYLGLV) form a helical membrane-spanning segment. Topologically, residues 102-125 (TGLTAGPIEMPAAHALAGEDVLSQ) are extracellular. The helical transmembrane segment at 126-147 (WGRYLTWTLSTPMILLALGWLA) threads the bilayer. At 148 to 150 (EVD) the chain is on the cytoplasmic side. Residues 151–174 (TADLFVVIAADIGMCLTGLAAALT) traverse the membrane as a helical segment. Topologically, residues 175–177 (TSS) are extracellular. A helical transmembrane segment spans residues 178–200 (YAFRWAFYLVSTAFFVVVLYALL). The Cytoplasmic portion of the chain corresponds to 201–212 (AKWPTNAEAAGT). The helical transmembrane segment at 213-236 (GDIFGTLRWLTVILWLGYPILWAL) threads the bilayer. Topologically, residues 237–246 (GVEGFALVDS) are extracellular. The chain crosses the membrane as a helical span at residues 247-275 (VGLTSWGYSLLDIGAKYLFAALLLRWVAN). Lysine 262 is modified (N6-(retinylidene)lysine). Over 276 to 297 (NERTIAVGQRSGRGAIGDPVED) the chain is Cytoplasmic.

Belongs to the archaeal/bacterial/fungal opsin family.

Its subcellular location is the cell membrane. Light-driven chloride pump. This chain is Halorhodopsin (hop), found in Haloterrigena sp. (strain arg-4).